We begin with the raw amino-acid sequence, 366 residues long: MASSVTPLGSWVLLHHHPSTILTQSRSRSPPSLITLKPISLTPKRTVSSSSSSSLITKEDNNLKSSSSSFDFMSYIIRKADSVNKALDSAVPLREPLKIHEAMRYSLLAGGKRVRPVLCIAACELVGGEESLAMPARCAVEMIHTMSLIHDDLPCMDNDDLRRGKPTNHKVYGEDVAVLAGDALLSFAFEHLASATSSEVSPARVVRAVGELAKAIGTEGLVAGQVVDISSEGLDLNNVGLEHLKFIHLHKTAALLEASAVLGGIIGGGSDEEIERLRKFARCIGLLFQVVDDILDVTKSSQELGKTAGKDLIADKLTYPKLMGLEKSREFAEKLNTEARDQLLGFDSDKVAPLLALANYIANRQN.

The interval 44-65 (KRTVSSSSSSSLITKEDNNLKS) is disordered. Isopentenyl diphosphate is bound by residues Lys112, Arg115, and His144. Residues Asp151 and Asp157 each contribute to the Mg(2+) site. Arg162 is a binding site for dimethylallyl diphosphate. Position 163 (Arg163) interacts with isopentenyl diphosphate. Dimethylallyl diphosphate is bound by residues Lys251, Thr252, Gln289, Lys306, and Lys316.

This sequence belongs to the FPP/GGPP synthase family. Dimer. The cofactor is Mg(2+).

The protein resides in the plastid. It localises to the chloroplast stroma. The protein localises to the chromoplast. The enzyme catalyses isopentenyl diphosphate + dimethylallyl diphosphate = (2E)-geranyl diphosphate + diphosphate. It catalyses the reaction isopentenyl diphosphate + (2E)-geranyl diphosphate = (2E,6E)-farnesyl diphosphate + diphosphate. It carries out the reaction isopentenyl diphosphate + (2E,6E)-farnesyl diphosphate = (2E,6E,10E)-geranylgeranyl diphosphate + diphosphate. The protein operates within isoprenoid biosynthesis; farnesyl diphosphate biosynthesis; farnesyl diphosphate from geranyl diphosphate and isopentenyl diphosphate: step 1/1. It participates in isoprenoid biosynthesis; geranyl diphosphate biosynthesis; geranyl diphosphate from dimethylallyl diphosphate and isopentenyl diphosphate: step 1/1. Its pathway is isoprenoid biosynthesis; geranylgeranyl diphosphate biosynthesis; geranylgeranyl diphosphate from farnesyl diphosphate and isopentenyl diphosphate: step 1/1. In terms of biological role, catalyzes the trans-addition of the three molecules of IPP onto DMAPP to form geranylgeranyl pyrophosphate. This chain is Geranylgeranyl pyrophosphate synthase, chloroplastic/chromoplastic (GGPS1), found in Sinapis alba (White mustard).